The chain runs to 232 residues: CMP-N,N'-diacetyllegionaminic acid synthase (232 aa).

The protein belongs to the CMP-NeuNAc synthase family.

The catalysed reaction is N,N-diacetyllegionaminate + CTP = CMP-N,N-diacetyllegionaminate + diphosphate. Involved in biosynthesis of legionaminic acid (5,7-diamino-3,5,7,9-tetradeoxy-D-glycero-D-galacto-non-2-ulosonic acid)(Leg), a sialic acid-like derivative that is incorporated into virulence-associated cell surface glycoconjugates such as lipopolysaccharide (LPS) which could be a key determinant in the ability of L.pneumophila to inhibit the fusion of phagosomes with lysosomes. LPS contains a majority alpha2,4-linked homomer of legionaminic acid. Catalyzes the conversion of N,N'-diacetyllegionaminic acid (Leg5Ac7Ac) and CTP into CMP-N,N'-diacetyllegionaminic acid (CMP-Leg5Ac7Ac). This is CMP-N,N'-diacetyllegionaminic acid synthase (neuA) from Legionella pneumophila subsp. pneumophila (strain Philadelphia 1 / ATCC 33152 / DSM 7513).